Here is a 392-residue protein sequence, read N- to C-terminus: Transcription factor GATA-4 (392 aa).

Residues 75 to 113 are disordered; sequence SSAYNPGTSHPPVSPRFTFSSSPPITAPSSREVSYSSPL. Over residues 91 to 113 the composition is skewed to polar residues; it reads FTFSSSPPITAPSSREVSYSSPL. 2 GATA-type zinc fingers span residues 184-208 and 238-262; these read CVNC…CNAC and CANC…CNAC. Disordered stretches follow at residues 279–339 and 359–392; these read KEGI…HSNS and MPSL…LVLA. The span at 284 to 293 shows a compositional bias: basic residues; it reads TRKRKPKNLS. Positions 302-316 are enriched in low complexity; sequence SGSDSLTPSTSSTNS. The span at 364-380 shows a compositional bias: polar residues; sequence LSPQNHHSTFNPSPQAN.

In terms of tissue distribution, expressed at high levels in heart, small intestine, stomach, ovary, and liver. Found at much lower levels in lung, spleen, pancreas and skin.

The protein resides in the nucleus. Functionally, transcriptional activator that binds to the consensus sequence 5'-AGATAG-3'. Associated with cardiac specification and can regulate cardiac-specific transcription during embryogenesis. Activates the expression of cardiac MHC-alpha in vivo. The chain is Transcription factor GATA-4 (gata4) from Xenopus laevis (African clawed frog).